The following is a 294-amino-acid chain: uncharacterized protein (294 aa).

Residues 13–151 form the Tyrosine-protein phosphatase domain; the sequence is QCSQIRPYLY…LIDLEQKLRG (139 aa). The active-site Phosphocysteine intermediate is Cys95. Residues 234–294 form a disordered region; it reads PTLLVPSSSS…WRLSFHKDVV (61 aa).

Belongs to the protein-tyrosine phosphatase family. Non-receptor class dual specificity subfamily.

This is an uncharacterized protein from Caenorhabditis elegans.